The following is a 1131-amino-acid chain: Probable pre-mRNA-splicing factor ATP-dependent RNA helicase mog-1 (1131 aa).

Basic and acidic residues-rich tracts occupy residues 1 to 12 (MSDKRADGRLEG), 65 to 122 (RGVT…DRSG), 139 to 148 (WDQDDREGSS), 160 to 173 (RGER…DSER), 180 to 225 (RSER…WEEE), and 407 to 416 (GNYKESHQFA). Disordered regions lie at residues 1 to 225 (MSDK…WEEE) and 389 to 416 (MGVK…HQFA). One can recognise a Helicase ATP-binding domain in the interval 451–614 (MNVIRENNVV…FGGNCPTFTI (164 aa)). 464-471 (GETGSGKT) serves as a coordination point for ATP. The DEAH box motif lies at 561 to 564 (DEAH). The Helicase C-terminal domain occupies 629–812 (PVEDYVDAAV…NVVLLLKSLG (184 aa)). Composition is skewed to basic and acidic residues over residues 1085 to 1114 (EMRE…RRVV) and 1121 to 1131 (ARSERRKLWGL). The tract at residues 1085-1131 (EMREAQKEMERRKEESDKAFKRPESSRRVVEVGSKSARSERRKLWGL) is disordered.

This sequence belongs to the DEAD box helicase family. DEAH subfamily. PRP16 sub-subfamily.

The protein localises to the nucleus. The enzyme catalyses ATP + H2O = ADP + phosphate + H(+). Functionally, probable ATP-binding RNA helicase involved in pre-mRNA splicing. The chain is Probable pre-mRNA-splicing factor ATP-dependent RNA helicase mog-1 (mog-1) from Caenorhabditis elegans.